A 380-amino-acid chain; its full sequence is Cell division protein FtsZ (380 aa).

GTP is bound by residues 27 to 31, 119 to 121, glutamate 150, and asparagine 189; these read GAGNN and GTG.

It belongs to the FtsZ family. In terms of assembly, homodimer. Polymerizes to form a dynamic ring structure in a strictly GTP-dependent manner. Interacts directly with several other division proteins.

The protein resides in the cytoplasm. Functionally, essential cell division protein that forms a contractile ring structure (Z ring) at the future cell division site. The regulation of the ring assembly controls the timing and the location of cell division. One of the functions of the FtsZ ring is to recruit other cell division proteins to the septum to produce a new cell wall between the dividing cells. Binds GTP and shows GTPase activity. The chain is Cell division protein FtsZ from Mycoplasma pneumoniae (strain ATCC 29342 / M129 / Subtype 1) (Mycoplasmoides pneumoniae).